Reading from the N-terminus, the 73-residue chain is Mu-sparatoxin-Hv2 (73 aa).

The signal sequence occupies residues 1 to 20 (MKFAIVITLLLVAFSAVALA). Positions 21–35 (DKSIERAVMDLITAR) are excised as a propeptide. Disulfide bonds link C39–C53, C46–C58, and C52–C68. The residue at position 72 (F72) is a Phenylalanine amide.

It belongs to the neurotoxin 10 (Hwtx-1) family. In terms of tissue distribution, expressed by the venom gland.

The protein resides in the secreted. In terms of biological role, insecticidal toxin that potently and irreversibly blocks voltage-gated sodium channels (Nav) in cockroach dorsal unpaired median (DUM) neurons (IC(50)=833.7 nM). It does not change both the steady-state activation and inactivation curves, suggesting it acts as a pore blocker (possibly at Nav site 1). Does not show toxicity when intraperitoneally injected into mouse. In Heteropoda venatoria (Brown huntsman spider), this protein is Mu-sparatoxin-Hv2.